We begin with the raw amino-acid sequence, 577 residues long: Arginine--tRNA ligase (577 aa).

The short motif at 122-132 (PNVAKEMHVGH) is the 'HIGH' region element.

It belongs to the class-I aminoacyl-tRNA synthetase family. Monomer.

It is found in the cytoplasm. It carries out the reaction tRNA(Arg) + L-arginine + ATP = L-arginyl-tRNA(Arg) + AMP + diphosphate. The polypeptide is Arginine--tRNA ligase (Aliivibrio fischeri (strain ATCC 700601 / ES114) (Vibrio fischeri)).